Here is a 487-residue protein sequence, read N- to C-terminus: Glutamyl-tRNA(Gln) amidotransferase subunit A (487 aa).

Residues lysine 77 and serine 152 each act as charge relay system in the active site. Catalysis depends on serine 176, which acts as the Acyl-ester intermediate.

Belongs to the amidase family. GatA subfamily. As to quaternary structure, heterotrimer of A, B and C subunits.

It carries out the reaction L-glutamyl-tRNA(Gln) + L-glutamine + ATP + H2O = L-glutaminyl-tRNA(Gln) + L-glutamate + ADP + phosphate + H(+). In terms of biological role, allows the formation of correctly charged Gln-tRNA(Gln) through the transamidation of misacylated Glu-tRNA(Gln) in organisms which lack glutaminyl-tRNA synthetase. The reaction takes place in the presence of glutamine and ATP through an activated gamma-phospho-Glu-tRNA(Gln). This chain is Glutamyl-tRNA(Gln) amidotransferase subunit A, found in Lactiplantibacillus plantarum (strain ATCC BAA-793 / NCIMB 8826 / WCFS1) (Lactobacillus plantarum).